We begin with the raw amino-acid sequence, 366 residues long: RISC-loading complex subunit TARBP2 (366 aa).

Sufficient for interaction with PRKRA stretches follow at residues 22-105, 152-234, and 287-366; these read MLAA…EPAL, SPQQ…DARD, and LGAL…AGSK. The 68-residue stretch at 30–97 folds into the DRBM 1 domain; it reads TPISLLQEYG…AEVALKHLKG (68 aa). Residues 135-158 form a disordered region; that stretch reads PSAVPTRSSPMEVQPPVSPQQSEC. Position 152 is a phosphoserine (serine 152). 2 DRBM domains span residues 159-227 and 293-361; these read NPVG…RVHT and ACCS…YLKI. The interval 228–366 is sufficient for interaction with DICER1; the sequence is VPLDARDGNE…QYLKIMAGSK (139 aa).

It belongs to the TARBP2 family. As to quaternary structure, self-associates. Component of the RISC loading complex (RLC), or micro-RNA (miRNA) loading complex (miRLC), which is composed of DICER1, AGO2 and TARBP2. Note that the trimeric RLC/miRLC is also referred to as RISC. Interacts with EIF2AK2/PKR and inhibits its protein kinase activity. Interacts with DHX9 and PRKRA. Interacts with DICER1, AGO2, MOV10, EIF6 and RPL7A (60S ribosome subunit); they form a large RNA-induced silencing complex (RISC). Interacts with IRF7; this interaction prevents IRF7 phosphorylation and activation.

The protein localises to the cytoplasm. It localises to the perinuclear region. Its subcellular location is the nucleus. Required for formation of the RNA induced silencing complex (RISC). Component of the RISC loading complex (RLC), also known as the micro-RNA (miRNA) loading complex (miRLC), which is composed of DICER1, AGO2 and TARBP2. Within the RLC/miRLC, DICER1 and TARBP2 are required to process precursor miRNAs (pre-miRNAs) to mature miRNAs and then load them onto AGO2. AGO2 bound to the mature miRNA constitutes the minimal RISC and may subsequently dissociate from DICER1 and TARBP2. May also play a role in the production of short interfering RNAs (siRNAs) from double-stranded RNA (dsRNA) by DICER1. Binds in vitro to the PRM1 3'-UTR. Seems to act as a repressor of translation. For some pre-miRNA substrates, may also alter the choice of cleavage site by DICER1. Negatively regulates IRF7-mediated IFN-beta signaling triggered by viral infection by inhibiting the phosphorylation of IRF7 and promoting its 'Lys'-48-linked ubiquitination and degradation. The sequence is that of RISC-loading complex subunit TARBP2 from Bos taurus (Bovine).